A 445-amino-acid chain; its full sequence is Na(+)-translocating NADH-quinone reductase subunit A (445 aa).

The protein belongs to the NqrA family. As to quaternary structure, composed of six subunits; NqrA, NqrB, NqrC, NqrD, NqrE and NqrF.

The enzyme catalyses a ubiquinone + n Na(+)(in) + NADH + H(+) = a ubiquinol + n Na(+)(out) + NAD(+). In terms of biological role, NQR complex catalyzes the reduction of ubiquinone-1 to ubiquinol by two successive reactions, coupled with the transport of Na(+) ions from the cytoplasm to the periplasm. NqrA to NqrE are probably involved in the second step, the conversion of ubisemiquinone to ubiquinol. This is Na(+)-translocating NADH-quinone reductase subunit A from Marinomonas sp. (strain MWYL1).